We begin with the raw amino-acid sequence, 447 residues long: N-succinylarginine dihydrolase (447 aa).

Substrate contacts are provided by residues 19–28, N110, and 137–138; these read AGLSFGNEAS and HR. E174 is a catalytic residue. Residue R212 coordinates substrate. Residue H248 is part of the active site. Substrate-binding residues include D250 and N359. Residue C365 is the Nucleophile of the active site.

This sequence belongs to the succinylarginine dihydrolase family. As to quaternary structure, homodimer.

It catalyses the reaction N(2)-succinyl-L-arginine + 2 H2O + 2 H(+) = N(2)-succinyl-L-ornithine + 2 NH4(+) + CO2. It functions in the pathway amino-acid degradation; L-arginine degradation via AST pathway; L-glutamate and succinate from L-arginine: step 2/5. Catalyzes the hydrolysis of N(2)-succinylarginine into N(2)-succinylornithine, ammonia and CO(2). The sequence is that of N-succinylarginine dihydrolase from Escherichia coli O81 (strain ED1a).